A 354-amino-acid chain; its full sequence is Probable L-ascorbate-6-phosphate lactonase UlaG (354 aa).

This sequence belongs to the UlaG family. Requires a divalent metal cation as cofactor.

The protein localises to the cytoplasm. It catalyses the reaction L-ascorbate 6-phosphate + H2O = 3-dehydro-L-gulonate 6-phosphate. It functions in the pathway cofactor degradation; L-ascorbate degradation; D-xylulose 5-phosphate from L-ascorbate: step 1/4. Its function is as follows. Probably catalyzes the hydrolysis of L-ascorbate-6-P into 3-keto-L-gulonate-6-P. Is essential for L-ascorbate utilization under anaerobic conditions. This is Probable L-ascorbate-6-phosphate lactonase UlaG from Shigella boydii serotype 4 (strain Sb227).